The chain runs to 416 residues: Calreticulin (416 aa).

The first 17 residues, 1-17 (MLLSVPLLLGLLGLAAA), serve as a signal peptide directing secretion. The tract at residues 18–197 (DPAIYFKEQF…NSQVESGSLE (180 aa)) is N-domain. Residue Gln-26 participates in Ca(2+) binding. Lys-48 carries the post-translational modification N6-acetyllysine. Ca(2+) contacts are provided by Lys-62 and Lys-64. An N6-(2-hydroxyisobutyryl)lysine modification is found at Lys-64. An intrachain disulfide couples Cys-105 to Cys-137. 4 residues coordinate an alpha-D-glucoside: Tyr-109, Lys-111, Tyr-128, and Asp-135. Residue Lys-159 is modified to N6-acetyllysine. The stretch at 191 to 202 (VESGSLEDDWDF) is one 1-1 repeat. The segment at 191–255 (VESGSLEDDW…DAKKPEDWDE (65 aa)) is 4 X approximate repeats. Residues 193–277 (SGSLEDDWDF…NPEYKGEWKP (85 aa)) form a disordered region. The tract at residues 198 to 308 (DDWDFLPPKK…YSPDANIYAY (111 aa)) is P-domain. Positions 207-251 (KIKDPDAAKPEDWDERAKIDDPTDSKPEDWDKPEHIPDPDAKKPE) are enriched in basic and acidic residues. Lys-209 bears the N6-acetyllysine mark. A run of 6 repeats spans residues 210–221 (DPDAAKPEDWDE), 227–238 (DPTDSKPEDWDK), 244–255 (DPDAKKPEDWDE), 259–269 (GEWEPPVIQNP), 273–283 (GEWKPRQIDNP), and 287–297 (GTWIHPEIDNP). The interaction with PPIB stretch occupies residues 237–270 (DKPEHIPDPDAKKPEDWDEEMDGEWEPPVIQNPE). Over residues 252 to 261 (DWDEEMDGEW) the composition is skewed to acidic residues. The tract at residues 259–297 (GEWEPPVIQNPEYKGEWKPRQIDNPDYKGTWIHPEIDNP) is 3 X approximate repeats. The C-domain stretch occupies residues 309–416 (DSFAVLGLDL…DATGQAKDEL (108 aa)). Asp-317 is a binding site for an alpha-D-glucoside. Asp-328 contributes to the Ca(2+) binding site. A disordered region spans residues 350–416 (TKAAEKQMKD…DATGQAKDEL (67 aa)). Basic and acidic residues predominate over residues 352–379 (AAEKQMKDKQDEEQRLKEEEEDKKRKEE). Positions 380–408 (EEAEDKEDEDDRDEDEDEEDEKEEDEEDA) are enriched in acidic residues. The Prevents secretion from ER motif lies at 413 to 416 (KDEL).

This sequence belongs to the calreticulin family. Monomer. Component of an EIF2 complex at least composed of CELF1/CUGBP1, CALR, CALR3, EIF2S1, EIF2S2, HSP90B1 and HSPA5. Interacts with GABARAP, NR3C1 and TRIM21. Interacts with PPIB and SPACA9. Interacts (via P-domain) with PDIA5. Interacts with PDIA3/ERp57. Interacts with CLCC1. In terms of tissue distribution, predentin and odontoblast.

It localises to the endoplasmic reticulum lumen. The protein localises to the cytoplasm. The protein resides in the cytosol. It is found in the secreted. Its subcellular location is the extracellular space. It localises to the extracellular matrix. The protein localises to the cell surface. The protein resides in the sarcoplasmic reticulum lumen. It is found in the cytoplasmic vesicle. Its subcellular location is the secretory vesicle. It localises to the cortical granule. The protein localises to the cytolytic granule. In terms of biological role, calcium-binding chaperone that promotes folding, oligomeric assembly and quality control in the endoplasmic reticulum (ER) via the calreticulin/calnexin cycle. This lectin interacts transiently with almost all of the monoglucosylated glycoproteins that are synthesized in the ER. Interacts with the DNA-binding domain of NR3C1 and mediates its nuclear export. Involved in maternal gene expression regulation. May participate in oocyte maturation via the regulation of calcium homeostasis. Present in the cortical granules of non-activated oocytes, is exocytosed during the cortical reaction in response to oocyte activation and might participate in the block to polyspermy. The protein is Calreticulin (Calr) of Rattus norvegicus (Rat).